We begin with the raw amino-acid sequence, 156 residues long: Small ribosomal subunit protein uS7 (156 aa).

Belongs to the universal ribosomal protein uS7 family. In terms of assembly, part of the 30S ribosomal subunit. Contacts proteins S9 and S11.

Functionally, one of the primary rRNA binding proteins, it binds directly to 16S rRNA where it nucleates assembly of the head domain of the 30S subunit. Is located at the subunit interface close to the decoding center, probably blocks exit of the E-site tRNA. The sequence is that of Small ribosomal subunit protein uS7 from Solibacter usitatus (strain Ellin6076).